A 1465-amino-acid polypeptide reads, in one-letter code: MEQSSGRVNPEQPNNVLASLVGSIVEKGISENKPPSKPLPPRPSLLSFPVARHRSHGPHLAPVGSSIAQPKDYNDDQEEEEAEERFMNADSIAAFAKPLQRKEKKDMDLGRWKDMVSGDDPASTHVPQQSRKLKIIETRPPYVASADAATTSSNTLLAARASDQREFVSDKAPFIKNLGTKERVPLNASPPLAVSNGLGTRHASSSLESDIDVENHAKLQTMSPDEIAEAQAELLDKMDPALLSILKKRGEAKLKKRKHSVQGVSITDETAKNSRTEGHFVTPKVMAIPKEKSVVQKPGIAQGFVWDAWTERVEAARDLRFSFDGNVVEEDVVSPAETGGKWSGVESAAERDFLRTEGDPGAAGYTIKEAIALARSVIPGQRCLALHLLASVLDKALNKLCQSRIGYAREEKDKSTDWEAIWAYALGPEPELVLALRMALDDNHASVVIACVKVIQCLLSCSLNENFFNILENMGPHGKDIFTASVFRSKPEIDLGFLRGCYWKYSAKPSNIVAFREEILDDGTEDTDTIQKDVFVAGQDVAAGLVRMDILPRIYHLLETEPTAALEDSIISVTIAIARHSPKCTTAILKYPKFVQTIVKRFQLNKRMDVLSSQINSVRLLKVLARYDQSTCMEFVKNGTFNAVTWHLFQFTSSLDSWVKLGKQNCKLSSTLMVEQLRFWKVCIHSGCCVSRFPELFPALCLWLSCPSFEKLREKNLISEFTSVSNEAYLVLEAFAETLPNMYSQNIPRNESGTWDWSYVSPMIDSALSWITLAPQLLKWEKGIESVSVSTTTLLWLYSGVMRTISKVLEKISAEGEEEPLPWLPEFVPKIGLAIIKHKLLSFSVADVSRFGKDSSRCSSFMEYLCFLRERSQDDELALASVNCLHGLTRTIVSIQNLIESARSKMKAPHQVSISTGDESVLANGILAESLAELTSVSCSFRDSVSSEWPIVQSIELHKRGGLAPGVGLGWGASGGGFWSTRVLLAQAGAGLLSLFLNISLSDSQNDQGSVGFMDKVNSALAMCLIAGPRDYLLVERAFEYVLRPHALEHLACCIKSNKKNISFEWECSEGDYHRMSSMLASHFRHRWLQQKGRSIAEEGVSGVRKGTVGLETIHEDGEMSNSSTQDKKSDSSTIEWAHQRMPLPPHWFLSAISAVHSGKTSTGPPESTELLEVAKAGVFFLAGLESSSGFGSLPSPVVSVPLVWKFHALSTVLLVGMDIIEDKNTRNLYNYLQELYGQFLDEARLNHRDTELLRFKSDIHENYSTFLEMVVEQYAAVSYGDVVYGRQVSVYLHQCVEHSVRLSAWTVLSNARVLELLPSLDKCLGEADGYLEPVEENEAVLEAYLKSWTCGALDRAATRGSVAYTLVVHHFSSLVFCNQAKDKVSLRNKIVKTLVRDLSRKRHREGMMLDLLRYKKGSANAMEEEVIAAETEKRMEVLKEGCEGNSTLLLELEKLKSAALCGRR.

Disordered stretches follow at residues 27–85, 186–211, and 1113–1135; these read KGIS…AEER, LNASPPLAVSNGLGTRHASSSLESDI, and TIHEDGEMSNSSTQDKKSDSSTI.

Belongs to the RPAP1 family. As to quaternary structure, interacts with HAG3, NRPB3 and NRPB10L. As to expression, expressed in root and shoot apices and in leaf and flower primordia. Detected in the endosperm, embryo, meristems and in organ primordia, but not in mature cells. Found exclusively in the vascular bundles in mature leaves.

Its subcellular location is the cytoplasm. The protein localises to the nucleus. Its function is as follows. Positive regulator of transcriptional elongation that is essential for cells to initiate differentiation. Interacts with RNA polymerase II and the Elongator complex and is required to sustain global levels of transcriptional elongation activity, specifically in differentiating tissues. The chain is Transcriptional elongation regulator MINIYO from Arabidopsis thaliana (Mouse-ear cress).